The chain runs to 446 residues: MSHHLCIWLFRNPFLRACPQRHVFLSCQQFRQISLDTRPWNFRQKKTHVLYQLLNKSWSRGCCHQGTRKLWKHKALQKYMEDLNKEYQTLDQCLQGISENEGDRRALHRRHAQLAPLAAVYQEIQEAEQAIEELESLCKSLNKQDEKQLQELVSEERQIIDQKIHRLYSELLERLVPKEKYDWSDVILEVTSGRTTGGDICQQFTREIFDMYQNYSYYKHWKFELLNYTPADYGGLHHAAARISGDSVYKHLKYEGGIHRVQRIPEVGLSSRMQRIHTGTMSVIVLPQPDEVDVKVDPKDLRVDTFRARGAGGQHVNTTDSAVRLVHIPTGLVVECQQERSQLKNKEIALRVLRARLYQQIIEKDRCQQQNARKLQVGTRAQSERIRTYNFTQDRVTDHRIAYEVRDIKEFLRGEKCLDQLIERLLQSADEEAISEFLDESLQSVK.

The N-terminal 62 residues, 1-62 (MSHHLCIWLF…LLNKSWSRGC (62 aa)), are a transit peptide targeting the mitochondrion. The segment at 298-362 (PKDLRVDTFR…LRARLYQQII (65 aa)) is GGQ domain. A GGQ motif is present at residues 312–314 (GGQ). Q314 carries the N5-methylglutamine modification.

Belongs to the prokaryotic/mitochondrial release factor family. In terms of processing, methylation of glutamine in the GGQ triplet by HEMK1 is conserved from bacteria to mammals.

It is found in the mitochondrion. Functionally, mitochondrial peptide chain release factor that directs the termination of translation in response to the peptide chain non-canonical stop codons AGG and AGA. Non-canonical termination codons AGG and AGA are found at the end of MT-CO1/COX1 and MT-ND6/ND6 open reading frames, respectively. Recognizes non-canonical stop codons via a network of interactions between the codon, MTRF1 and the ribosomal RNA (rRNA): in contrast to other translation release factors, which identify the codon in the A-site via direct interactions of amino acid side chains with the bases, MTRF1 repositions the first 2 bases of the stop codon to use an intricate network of interactions that includes residues of the release factor, the rRNA of the small ribosomal subunit, as well as neighboring bases of the mRNA. The sequence is that of Peptide chain release factor 1, mitochondrial from Mus musculus (Mouse).